Consider the following 471-residue polypeptide: Alpha-1,3/1,6-mannosyltransferase alg-2 (471 aa).

N-linked (GlcNAc...) asparagine glycans are attached at residues Asn-178 and Asn-279. Residues 446 to 466 (GMILLVVGAAVAAVAGVISAV) traverse the membrane as a helical segment.

The protein belongs to the glycosyltransferase group 1 family. Glycosyltransferase 4 subfamily.

It is found in the endoplasmic reticulum membrane. It catalyses the reaction a beta-D-Man-(1-&gt;4)-beta-D-GlcNAc-(1-&gt;4)-alpha-D-GlcNAc-diphospho-di-trans,poly-cis-dolichol + GDP-alpha-D-mannose = an alpha-D-Man-(1-&gt;3)-beta-D-Man-(1-&gt;4)-beta-D-GlcNAc-(1-&gt;4)-alpha-D-GlcNAc-diphospho-di-trans,poly-cis-dolichol + GDP + H(+). The catalysed reaction is an alpha-D-Man-(1-&gt;3)-beta-D-Man-(1-&gt;4)-beta-D-GlcNAc-(1-&gt;4)-alpha-D-GlcNAc-diphospho-di-trans,poly-cis-dolichol + GDP-alpha-D-mannose = an alpha-D-Man-(1-&gt;3)-[alpha-D-Man-(1-&gt;6)]-beta-D-Man-(1-&gt;4)-beta-D-GlcNAc-(1-&gt;4)-alpha-D-GlcNAc-diphospho-di-trans,poly-cis-dolichol + GDP + H(+). It functions in the pathway protein modification; protein glycosylation. In terms of biological role, mannosylates Man(2)GlcNAc(2)-dolichol diphosphate and Man(1)GlcNAc(2)-dolichol diphosphate to form Man(3)GlcNAc(2)-dolichol diphosphate. The sequence is that of Alpha-1,3/1,6-mannosyltransferase alg-2 (alg-2) from Neurospora crassa (strain ATCC 24698 / 74-OR23-1A / CBS 708.71 / DSM 1257 / FGSC 987).